Reading from the N-terminus, the 819-residue chain is ATP-dependent Clp protease ATP-binding subunit ClpA homolog (819 aa).

One can recognise a Clp R domain in the interval 2 to 144; it reads FERFTEKAIK…RTQVIRLLGD (143 aa). Repeat regions lie at residues 5–70 and 80–144; these read FTEK…IGRG and FTPR…LLGD. The interval 162–409 is i; it reads LEEFGSNLTQ…RVRLMNSQLP (248 aa). 207-214 lines the ATP pocket; it reads GEPGVGKT. The UVR domain occupies 416 to 451; the sequence is DKELREILKQKDEAVRSQDFETAGQLRDREMEIKAQ. Positions 472-663 are II; the sequence is VTEEDIAQIV…LLILTSNVGS (192 aa). Residue 546-553 participates in ATP binding; that stretch reads GPTGVGKT.

It belongs to the ClpA/ClpB family.

The protein localises to the plastid. Its subcellular location is the chloroplast. In terms of biological role, may interact with a ClpP-like protease involved in degradation of denatured proteins in the chloroplast. This is ATP-dependent Clp protease ATP-binding subunit ClpA homolog (clpC) from Guillardia theta (Cryptophyte).